Here is a 150-residue protein sequence, read N- to C-terminus: Ribonuclease pancreatic delta-type (150 aa).

The N-terminal stretch at 1–25 is a signal peptide; that stretch reads MGLEKSLILFSLLVLVLGWVQPSLG. Position 35 (Arg-35) interacts with substrate. Catalysis depends on His-37, which acts as the Proton acceptor. Disulfide bonds link Cys-51–Cys-110, Cys-65–Cys-121, Cys-83–Cys-136, and Cys-90–Cys-98. Residues 66-70, Lys-91, and Arg-111 each bind substrate; that span reads KRVNT. His-145 acts as the Proton donor in catalysis.

Belongs to the pancreatic ribonuclease family. As to quaternary structure, monomer.

Its subcellular location is the secreted. It catalyses the reaction an [RNA] containing cytidine + H2O = an [RNA]-3'-cytidine-3'-phosphate + a 5'-hydroxy-ribonucleotide-3'-[RNA].. It carries out the reaction an [RNA] containing uridine + H2O = an [RNA]-3'-uridine-3'-phosphate + a 5'-hydroxy-ribonucleotide-3'-[RNA].. In terms of biological role, endonuclease that catalyzes the cleavage of RNA on the 3' side of pyrimidine nucleotides. Acts on single-stranded and double-stranded RNA. The polypeptide is Ribonuclease pancreatic delta-type (Rattus exulans (Polynesian rat)).